The sequence spans 492 residues: Putative transporter SVOPL (492 aa).

A run of 10 helical transmembrane segments spans residues 48–68 (IALFLIMGSTGVVEAMEIMLI), 86–106 (VALVTTMVFFGYMVFSILFGL), 121–141 (FLWGAYFSLLTSFAPSYIWFV), 179–199 (VFWLAGSLLIIGLASVIIPTI), 203–223 (WLIRVASIPGIILIVAFKFIP), 281–301 (TLQIWVIWLGISFAYYGVILA), 348–368 (IISTIGEIALNPLNILGINFL), 383–403 (LFFLLLNICTSSAGLIGFLFM), 429–449 (ALGMGTSGSLCRIGAMVAPFI), and 458–478 (ILGALCLFSSVCVVCAISAFT).

This sequence belongs to the major facilitator superfamily.

The protein localises to the membrane. In Homo sapiens (Human), this protein is Putative transporter SVOPL (SVOPL).